Reading from the N-terminus, the 589-residue chain is Nicotinate phosphoribosyltransferase (589 aa).

A disordered region spans residues 1-30; that stretch reads MSQSNTPLKRKKTENGYSENGSTTGATSNQ. Over residues 15-30 the composition is skewed to polar residues; it reads NGYSENGSTTGATSNQ. Positions 68 and 256 each coordinate nicotinate. His-259 carries the post-translational modification Phosphohistidine. Position 356 (Arg-356) interacts with nicotinate. Thr-418 provides a ligand contact to 5-phospho-alpha-D-ribose 1-diphosphate.

Belongs to the NAPRTase family. Mg(2+) serves as cofactor. It depends on Mn(2+) as a cofactor. Post-translationally, transiently phosphorylated on a His residue during the reaction cycle. Phosphorylation strongly increases the affinity for substrates and increases the rate of nicotinate D-ribonucleotide production. Dephosphorylation regenerates the low-affinity form of the enzyme, leading to product release.

The enzyme catalyses nicotinate + 5-phospho-alpha-D-ribose 1-diphosphate + ATP + H2O = nicotinate beta-D-ribonucleotide + ADP + phosphate + diphosphate. Its pathway is cofactor biosynthesis; NAD(+) biosynthesis; nicotinate D-ribonucleotide from nicotinate: step 1/1. Catalyzes the first step in the biosynthesis of NAD from nicotinic acid, the ATP-dependent synthesis of beta-nicotinate D-ribonucleotide from nicotinate and 5-phospho-D-ribose 1-phosphate. Helps prevent cellular oxidative stress via its role in NAD biosynthesis. This is Nicotinate phosphoribosyltransferase (naprt) from Dictyostelium discoideum (Social amoeba).